Consider the following 391-residue polypeptide: Na(+)/H(+) antiporter NhaA (391 aa).

The next 11 membrane-spanning stretches (helical) occupy residues 14–34 (GGII…LGAT), 59–79 (MLLW…GLEV), 95–115 (AFPV…YLAF), 125–145 (GWAI…ALLG), 154–174 (IFLM…IALF), 180–200 (SILS…LNIF), 219–239 (VLKS…FIPL), 254–274 (VLHP…NAGV), 292–312 (IIAG…WLAL), 328–348 (IMAV…ISTL), and 357–377 (LIVW…FVGY).

This sequence belongs to the NhaA Na(+)/H(+) (TC 2.A.33) antiporter family.

Its subcellular location is the cell inner membrane. It catalyses the reaction Na(+)(in) + 2 H(+)(out) = Na(+)(out) + 2 H(+)(in). In terms of biological role, na(+)/H(+) antiporter that extrudes sodium in exchange for external protons. The sequence is that of Na(+)/H(+) antiporter NhaA from Enterobacter sp. (strain 638).